We begin with the raw amino-acid sequence, 429 residues long: MIELDINASDKSLSHRAVIFSLLAQKPCVVRNFLMGEDCLSSLEIAQNLGAKVENIAKNSFKITPPTALKEPNKILNCNNSGTSMRLYSGLLSAQKGLFVLSGDNSLNARPMKRIIEPLKAFGAKILGREDNHFAPLAILGSPLKACDYESPIASAQVKSAFILSALQAQGSSTYKENELSRNHTEIMLKSLGANIQNQNGVLTILPLEKPLEAFDFTIANDPSSAFFFALSCAITPKSRLLLKNVLLNPTRIEAFEALKKMGASIEYAIQSKDLEMIGDIYIEHAPLKAISIEQNIASLIDEIPALSIAMLFAKGKSMVKNAKDLRSKESDRIKAVVSNFKALGIECEEFEDGFCIEGLEDISQLKQRFSQKKPPLIQSFNDHRIAMSFAILTLALPLEIDNLECANISFPQFKRLLNLFKKRSFNGN.

3-phosphoshikimate-binding residues include lysine 11, serine 12, and arginine 16. Position 11 (lysine 11) interacts with phosphoenolpyruvate. Residues glycine 82 and arginine 110 each contribute to the phosphoenolpyruvate site. Residues serine 155, glutamine 157, aspartate 302, and lysine 329 each contribute to the 3-phosphoshikimate site. Glutamine 157 provides a ligand contact to phosphoenolpyruvate. The Proton acceptor role is filled by aspartate 302. Arginine 333 and arginine 385 together coordinate phosphoenolpyruvate.

It belongs to the EPSP synthase family. In terms of assembly, monomer.

The protein localises to the cytoplasm. The enzyme catalyses 3-phosphoshikimate + phosphoenolpyruvate = 5-O-(1-carboxyvinyl)-3-phosphoshikimate + phosphate. The protein operates within metabolic intermediate biosynthesis; chorismate biosynthesis; chorismate from D-erythrose 4-phosphate and phosphoenolpyruvate: step 6/7. Catalyzes the transfer of the enolpyruvyl moiety of phosphoenolpyruvate (PEP) to the 5-hydroxyl of shikimate-3-phosphate (S3P) to produce enolpyruvyl shikimate-3-phosphate and inorganic phosphate. The polypeptide is 3-phosphoshikimate 1-carboxyvinyltransferase (Helicobacter pylori (strain Shi470)).